A 601-amino-acid chain; its full sequence is Glutamine--fructose-6-phosphate aminotransferase [isomerizing] (601 aa).

Catalysis depends on C2, which acts as the Nucleophile; for GATase activity. The Glutamine amidotransferase type-2 domain occupies 2 to 216; it reads CGIVGYIGTN…DKEIVIVTKD (215 aa). SIS domains lie at 282 to 421 and 453 to 591; these read IIDE…EIGD and IAGE…VDKP. Catalysis depends on K596, which acts as the For Fru-6P isomerization activity.

In terms of assembly, homodimer.

It is found in the cytoplasm. It carries out the reaction D-fructose 6-phosphate + L-glutamine = D-glucosamine 6-phosphate + L-glutamate. Its function is as follows. Catalyzes the first step in hexosamine metabolism, converting fructose-6P into glucosamine-6P using glutamine as a nitrogen source. This Listeria monocytogenes serovar 1/2a (strain ATCC BAA-679 / EGD-e) protein is Glutamine--fructose-6-phosphate aminotransferase [isomerizing].